The chain runs to 487 residues: Protein nucleotidyltransferase YdiU (487 aa).

ATP contacts are provided by glycine 90, glycine 92, arginine 93, lysine 113, aspartate 125, glycine 126, arginine 176, and arginine 183. Aspartate 252 serves as the catalytic Proton acceptor. The Mg(2+) site is built by asparagine 253 and aspartate 262. Aspartate 262 contributes to the ATP binding site.

This sequence belongs to the SELO family. Mg(2+) is required as a cofactor. It depends on Mn(2+) as a cofactor.

The enzyme catalyses L-seryl-[protein] + ATP = 3-O-(5'-adenylyl)-L-seryl-[protein] + diphosphate. It carries out the reaction L-threonyl-[protein] + ATP = 3-O-(5'-adenylyl)-L-threonyl-[protein] + diphosphate. It catalyses the reaction L-tyrosyl-[protein] + ATP = O-(5'-adenylyl)-L-tyrosyl-[protein] + diphosphate. The catalysed reaction is L-histidyl-[protein] + UTP = N(tele)-(5'-uridylyl)-L-histidyl-[protein] + diphosphate. The enzyme catalyses L-seryl-[protein] + UTP = O-(5'-uridylyl)-L-seryl-[protein] + diphosphate. It carries out the reaction L-tyrosyl-[protein] + UTP = O-(5'-uridylyl)-L-tyrosyl-[protein] + diphosphate. Nucleotidyltransferase involved in the post-translational modification of proteins. It can catalyze the addition of adenosine monophosphate (AMP) or uridine monophosphate (UMP) to a protein, resulting in modifications known as AMPylation and UMPylation. This is Protein nucleotidyltransferase YdiU from Pseudomonas fluorescens (strain SBW25).